Here is a 145-residue protein sequence, read N- to C-terminus: Secreted RxLR effector protein 43 (145 aa).

The first 20 residues, 1–20, serve as a signal peptide directing secretion; that stretch reads MKVTMALAALCVALQAPCIG. The short motif at 31-34 is the RxLR element; it reads RHLR.

Belongs to the RxLR effector family.

It is found in the secreted. The protein localises to the host nucleus. It localises to the host cytoplasm. In terms of biological role, secreted effector that completely suppresses the host cell death induced by cell death-inducing proteins. The polypeptide is Secreted RxLR effector protein 43 (Plasmopara viticola (Downy mildew of grapevine)).